The sequence spans 150 residues: 3-hydroxyacyl-[acyl-carrier-protein] dehydratase FabZ (150 aa).

Residue His-51 is part of the active site.

The protein belongs to the thioester dehydratase family. FabZ subfamily.

It is found in the cytoplasm. It catalyses the reaction a (3R)-hydroxyacyl-[ACP] = a (2E)-enoyl-[ACP] + H2O. Functionally, involved in unsaturated fatty acids biosynthesis. Catalyzes the dehydration of short chain beta-hydroxyacyl-ACPs and long chain saturated and unsaturated beta-hydroxyacyl-ACPs. The chain is 3-hydroxyacyl-[acyl-carrier-protein] dehydratase FabZ from Legionella pneumophila (strain Lens).